Consider the following 339-residue polypeptide: UDP-N-acetylenolpyruvoylglucosamine reductase (339 aa).

Residues 16-188 enclose the FAD-binding PCMH-type domain; sequence GIAATARYYS…LQVTLRLNKQ (173 aa). Arginine 164 is a catalytic residue. Serine 238 functions as the Proton donor in the catalytic mechanism. The active site involves glutamate 334.

This sequence belongs to the MurB family. FAD serves as cofactor.

The protein resides in the cytoplasm. The enzyme catalyses UDP-N-acetyl-alpha-D-muramate + NADP(+) = UDP-N-acetyl-3-O-(1-carboxyvinyl)-alpha-D-glucosamine + NADPH + H(+). Its pathway is cell wall biogenesis; peptidoglycan biosynthesis. Functionally, cell wall formation. This is UDP-N-acetylenolpyruvoylglucosamine reductase from Amoebophilus asiaticus (strain 5a2).